Consider the following 673-residue polypeptide: Putative lipase atg15 (673 aa).

Residues 1-7 are Cytoplasmic-facing; that stretch reads MPRKRSR. Residues 8–28 traverse the membrane as a helical; Signal-anchor for type II membrane protein segment; that stretch reads FELSIHSLLLSVAVLSGAAYA. The Lumenal portion of the chain corresponds to 29-673; it reads SGYYPPSQQV…AVTSAPTPTS (645 aa). N-linked (GlcNAc...) asparagine glycans are attached at residues Asn-156, Asn-191, Asn-213, Asn-271, and Asn-295. Ser-311 acts as the Charge relay system in catalysis. A glycan (N-linked (GlcNAc...) asparagine) is linked at Asn-457.

The protein belongs to the AB hydrolase superfamily. Lipase family. Binds to both phosphatidylinositol (PI) and phosphatidylinositol 3,5-bisphosphate (PIP2).

The protein localises to the endosome. It localises to the multivesicular body membrane. Its subcellular location is the prevacuolar compartment membrane. It carries out the reaction a triacylglycerol + H2O = a diacylglycerol + a fatty acid + H(+). Its function is as follows. Lipase which is essential for lysis of subvacuolar cytoplasm to vacuole targeted bodies and intravacuolar autophagic bodies. Involved in the lysis of intravacuolar multivesicular body (MVB) vesicles. The intravacuolar membrane disintegration by atg15 is critical to life span extension. The protein is Putative lipase atg15 (atg15) of Penicillium rubens (strain ATCC 28089 / DSM 1075 / NRRL 1951 / Wisconsin 54-1255) (Penicillium chrysogenum).